Consider the following 301-residue polypeptide: Putative two-component membrane permease complex subunit SMU_747c (301 aa).

A run of 8 helical transmembrane segments spans residues 15-35 (LAIFLSIIIEALPFILLGAIL), 60-80 (ILFGTFVGFIFPSCECGIVPI), 97-117 (FLATAPIINPIVLFATFSAFG), 124-144 (FLRLFGAIIVAISLGILLGFI), 188-208 (YLIFGSFVAASMQIYVPTRIL), 211-231 (IGHNPLTAILIMMLLAFILSL), 238-258 (FIGTSLLATFGVAPVVAFLLI), and 278-298 (FILQFVGTSSLIIIIYCLIVG).

It belongs to the UPF0718 family. As to quaternary structure, interacts with SMU_746c.

It is found in the cell membrane. In terms of biological role, could be part of a two-component membrane permease system responsible for amino acid transport under low pH. Involved in acidogenesis, biofilm formation and low-pH survival. This Streptococcus mutans serotype c (strain ATCC 700610 / UA159) protein is Putative two-component membrane permease complex subunit SMU_747c.